Here is a 498-residue protein sequence, read N- to C-terminus: Cytochrome P450 71D15 (498 aa).

Residues 3 to 23 traverse the membrane as a helical; Signal-anchor for type II membrane protein segment; the sequence is LLQLWSALIILVVTYTISLLI. A heme-binding site is contributed by cysteine 437.

This sequence belongs to the cytochrome P450 family. Heme is required as a cofactor.

The protein localises to the endoplasmic reticulum membrane. It carries out the reaction (4S)-limonene + reduced [NADPH--hemoprotein reductase] + O2 = (1S,6R)-isopiperitenol + oxidized [NADPH--hemoprotein reductase] + H2O + H(+). Its function is as follows. Hydroxylates (-)-(4S)-limonene to (-)-trans-isopiperitenol, a precursor of (-)-menthol, responsible for the cooling sensation of peppermint. Fluorinated substrate analogs are hydroxylated with the same regio- and stereochemistry. The sequence is that of Cytochrome P450 71D15 (CYP71D15) from Mentha piperita (Peppermint).